The chain runs to 523 residues: Flavin-dependent halogenase armH5 (523 aa).

The FAD site is built by glycine 17, alanine 20, and glutamate 50. Residues serine 328 and glycine 329 each coordinate chloride. An FAD-binding site is contributed by valine 330.

Belongs to the flavin-dependent halogenase family.

It catalyses the reaction melleolide F + FADH2 + chloride + O2 = 6'-chloromelleolide F + FAD + 2 H2O + H(+). Flavin-dependent halogenase involved in the biosynthesis of melleolides, a range of antifungal and phytotoxic polyketide derivatives composed of an orsellinic acid (OA) moiety esterified to various sesquiterpene alcohols. The halogenase catalyzes the transfer of a single chlorine atom to the melleolide backbone, resulting in a 6'-chloromelleolide product. The enzyme acts on free substrate and does not depend on carrier-protein-dependent acceptor molecules. The chain is Flavin-dependent halogenase armH5 from Armillaria mellea (Honey mushroom).